The chain runs to 120 residues: BLOC-1-related complex subunit 8 (120 aa).

Residues 101-120 (MNTSAQGHSQEKLSPPPSLA) form a disordered region. Position 109 is a phosphoserine (S109).

It belongs to the BORCS8 family. Component of the BLOC-one-related complex (BORC) which is composed of BLOC1S1, BLOC1S2, BORCS5, BORCS6, BORCS7, BORCS8, KXD1 and SNAPIN.

It localises to the lysosome membrane. Its function is as follows. As part of the BLOC-one-related complex (BORC), it plays a role in the movement and localization of lysosomes at the cell periphery. Associated with the cytosolic face of lysosomes, BORC recruits ARL8B to the lysosomal membrane and couples lysosomes to microtubule plus-end-directed kinesin motors, driving lysosome movement toward the cell periphery. This is BLOC-1-related complex subunit 8 from Mus musculus (Mouse).